The sequence spans 142 residues: Large ribosomal subunit protein uL13 (142 aa).

This sequence belongs to the universal ribosomal protein uL13 family. As to quaternary structure, part of the 50S ribosomal subunit.

This protein is one of the early assembly proteins of the 50S ribosomal subunit, although it is not seen to bind rRNA by itself. It is important during the early stages of 50S assembly. The polypeptide is Large ribosomal subunit protein uL13 (Thermococcus kodakarensis (strain ATCC BAA-918 / JCM 12380 / KOD1) (Pyrococcus kodakaraensis (strain KOD1))).